Reading from the N-terminus, the 447-residue chain is MTTILKHLPAGQRIGIAFSGGLDTSAALLWMRQKGAVPYAYTANLGQPDEDDYDAIPRRAMEYGAENARLIDCRKQLVAEGIAAIQCGAFHNTTGGLTYFNTTPLGRAVTGTMLVAAMKEDGVNIWGDGSTYKGNDIERFYRYGLLTNVELQIYKPWLDTDFIDELGGRHEMSEFMIACGFDYKMSVEKAYSTDSNMLGATHEAKDLEFLNSSVKIVNPIMGVKFWDESVKIPAEVVTVRFEQGHPVALNGKTFSDDVEMMLEANRIGGRHGLGMSDQIENRIIEAKSRGIYEAPGMALLHIAYERLLTGIHNEDTIEQYHSHGRQLGKLLYQGRWFDSQALMLRDGLQRWVASQITGEVTLELRRGNDYSILNTVSDNLTYKPERLTMEKGDSVFSPDDRIGQLTMRNLDITDTREKLFGYAKAGLLTASSATGLPQVENLENKGK.

ATP is bound by residues 17 to 25 and A43; that span reads AFSGGLDTS. Y99 contributes to the L-citrulline binding site. Residues G129 and T131 each coordinate ATP. Residues T131, N135, and D136 each coordinate L-aspartate. L-citrulline is bound at residue N135. ATP is bound at residue D136. 2 residues coordinate L-citrulline: R139 and S192. D194 contributes to the ATP binding site. The L-citrulline site is built by T201, E203, and E280.

The protein belongs to the argininosuccinate synthase family. Type 2 subfamily. Homotetramer.

The protein resides in the cytoplasm. The enzyme catalyses L-citrulline + L-aspartate + ATP = 2-(N(omega)-L-arginino)succinate + AMP + diphosphate + H(+). It functions in the pathway amino-acid biosynthesis; L-arginine biosynthesis; L-arginine from L-ornithine and carbamoyl phosphate: step 2/3. This Salmonella heidelberg (strain SL476) protein is Argininosuccinate synthase.